A 502-amino-acid polypeptide reads, in one-letter code: Probable cytosol aminopeptidase (502 aa).

Residues lysine 269 and aspartate 274 each contribute to the Mn(2+) site. The active site involves lysine 281. Residues aspartate 292, aspartate 351, and glutamate 353 each coordinate Mn(2+). The active site involves arginine 355.

Belongs to the peptidase M17 family. Mn(2+) serves as cofactor.

The protein localises to the cytoplasm. It catalyses the reaction Release of an N-terminal amino acid, Xaa-|-Yaa-, in which Xaa is preferably Leu, but may be other amino acids including Pro although not Arg or Lys, and Yaa may be Pro. Amino acid amides and methyl esters are also readily hydrolyzed, but rates on arylamides are exceedingly low.. It carries out the reaction Release of an N-terminal amino acid, preferentially leucine, but not glutamic or aspartic acids.. Functionally, presumably involved in the processing and regular turnover of intracellular proteins. Catalyzes the removal of unsubstituted N-terminal amino acids from various peptides. This Photobacterium profundum (strain SS9) protein is Probable cytosol aminopeptidase.